Consider the following 85-residue polypeptide: UPF0291 protein SPCG_1462 (85 aa).

The interval 62 to 85 is disordered; it reads TPEKLRQVQREKGLHGRSLDDPNS.

It belongs to the UPF0291 family.

Its subcellular location is the cytoplasm. The protein is UPF0291 protein SPCG_1462 of Streptococcus pneumoniae (strain CGSP14).